Reading from the N-terminus, the 366-residue chain is 3-dehydroquinate synthase (366 aa).

NAD(+)-binding positions include 74 to 79 (SGEAAK), 108 to 112 (GVVGD), 132 to 133 (TT), Lys144, Lys153, and 171 to 174 (FLRT). Zn(2+)-binding residues include Glu186, His249, and His266.

The protein belongs to the sugar phosphate cyclases superfamily. Dehydroquinate synthase family. Requires Co(2+) as cofactor. Zn(2+) is required as a cofactor. The cofactor is NAD(+).

The protein localises to the cytoplasm. The enzyme catalyses 7-phospho-2-dehydro-3-deoxy-D-arabino-heptonate = 3-dehydroquinate + phosphate. It participates in metabolic intermediate biosynthesis; chorismate biosynthesis; chorismate from D-erythrose 4-phosphate and phosphoenolpyruvate: step 2/7. Catalyzes the conversion of 3-deoxy-D-arabino-heptulosonate 7-phosphate (DAHP) to dehydroquinate (DHQ). The polypeptide is 3-dehydroquinate synthase (Geobacillus kaustophilus (strain HTA426)).